The chain runs to 359 residues: 3-dehydroquinate synthase (359 aa).

Residues 69–74, 103–107, 127–128, K140, and K149 contribute to the NAD(+) site; these read DAETGK, GAATD, and TT. The Zn(2+) site is built by E182, H244, and H260.

This sequence belongs to the sugar phosphate cyclases superfamily. Dehydroquinate synthase family. Co(2+) is required as a cofactor. Zn(2+) serves as cofactor. It depends on NAD(+) as a cofactor.

The protein resides in the cytoplasm. It carries out the reaction 7-phospho-2-dehydro-3-deoxy-D-arabino-heptonate = 3-dehydroquinate + phosphate. It functions in the pathway metabolic intermediate biosynthesis; chorismate biosynthesis; chorismate from D-erythrose 4-phosphate and phosphoenolpyruvate: step 2/7. In terms of biological role, catalyzes the conversion of 3-deoxy-D-arabino-heptulosonate 7-phosphate (DAHP) to dehydroquinate (DHQ). This chain is 3-dehydroquinate synthase, found in Corynebacterium diphtheriae (strain ATCC 700971 / NCTC 13129 / Biotype gravis).